Here is a 223-residue protein sequence, read N- to C-terminus: Thymidylate kinase (223 aa).

7 to 14 (GIDGAGKS) contacts ATP.

It belongs to the thymidylate kinase family.

It carries out the reaction dTMP + ATP = dTDP + ADP. Functionally, phosphorylation of dTMP to form dTDP in both de novo and salvage pathways of dTTP synthesis. This Prosthecochloris aestuarii (strain DSM 271 / SK 413) protein is Thymidylate kinase.